Reading from the N-terminus, the 972-residue chain is DNA cross-link repair 1A protein (972 aa).

Residues 14–80 are disordered; it reads YKSIRKRKPQ…SEDLDPCKDD (67 aa). A compositionally biased stretch (polar residues) spans 23 to 37; the sequence is QSNPDSTSVSMQTVT. Over residues 39-54 the composition is skewed to basic residues; the sequence is GKCRPKRKGSGNRKKS. Residues 64–80 show a composition bias toward basic and acidic residues; sequence SEQRLRPSEDLDPCKDD. The segment at 105–135 adopts a UBZ4-type zinc-finger fold; sequence DGYCPSCQMPFSLLVVQTPRWHVAECLDTPG. The Zn(2+) site is built by C108, C111, H126, and C130. Disordered stretches follow at residues 191 to 219 and 552 to 623; these read KSSC…NNEC and GEAC…TTDE. The span at 210-219 shows a compositional bias: polar residues; sequence NLKNVPNNEC.

Belongs to the DNA repair metallo-beta-lactamase (DRMBL) family. In terms of assembly, binds PIAS1.

The protein resides in the nucleus. It catalyses the reaction a beta-lactam + H2O = a substituted beta-amino acid. In terms of biological role, may be required for DNA interstrand cross-link repair. This chain is DNA cross-link repair 1A protein (DCLRE1A), found in Gallus gallus (Chicken).